A 60-amino-acid polypeptide reads, in one-letter code: Mannitol-specific phosphotransferase enzyme IIA component (60 aa).

One can recognise a PTS EIIA type-2 domain in the interval 2–60; the sequence is SELFSNDNIFLNVNVNSQNEAIEKAGKALVDSGAVTDAYIQVVSTFMGNGLAIPHGTDD. Residue H56 is the Tele-phosphohistidine intermediate of the active site. At H56 the chain carries Phosphohistidine; by HPr.

In terms of assembly, homodimer or homotrimer. Seems to be a monomer when not phosphorylated.

It localises to the cytoplasm. Its function is as follows. The phosphoenolpyruvate-dependent sugar phosphotransferase system (sugar PTS), a major carbohydrate active transport system, catalyzes the phosphorylation of incoming sugar substrates concomitantly with their translocation across the cell membrane. The enzyme II CmtAB PTS system is involved in D-mannitol transport. In Staphylococcus aureus, this protein is Mannitol-specific phosphotransferase enzyme IIA component.